The sequence spans 53 residues: uncharacterized protein (53 aa).

It belongs to the ELIP/psbS family.

Its subcellular location is the plastid. The protein resides in the chloroplast. In terms of biological role, possible role in chlorophyll and/or carotenoid binding. This is an uncharacterized protein from Guillardia theta (Cryptophyte).